Reading from the N-terminus, the 113-residue chain is MKHLAAYLLLGLGGNTSPSAADVKAVLESVGIEADSDRLDKLISELEGKDINELIASGSEKLASVPSGGAGGAAASGGAAAAGGSAQAEAAPEAAKEEEKEESDEDMGFGLFD.

The tract at residues 62 to 113 (LASVPSGGAGGAAASGGAAAAGGSAQAEAAPEAAKEEEKEESDEDMGFGLFD) is disordered. The segment covering 76 to 93 (SGGAAAAGGSAQAEAAPE) has biased composition (low complexity). S103 carries the phosphoserine modification.

This sequence belongs to the eukaryotic ribosomal protein P1/P2 family. P1 and P2 exist as dimers at the large ribosomal subunit.

Functionally, plays an important role in the elongation step of protein synthesis. This is Large ribosomal subunit protein P2 (ALTA5) from Alternaria alternata (Alternaria rot fungus).